The sequence spans 772 residues: 5-methyltetrahydropteroyltriglutamate--homocysteine methyltransferase (772 aa).

5-methyltetrahydropteroyltri-L-glutamate contacts are provided by residues 24–27 (RELK) and Lys-120. The tract at residues 404-428 (DPAVRSRTAATTDADARRSGPYPER) is disordered. L-homocysteine-binding positions include 446 to 448 (IGS) and Glu-499. Residues 446–448 (IGS) and Glu-499 each bind L-methionine. Residue Trp-576 coordinates 5-methyltetrahydropteroyltri-L-glutamate. Asp-614 contributes to the L-homocysteine binding site. Residue Asp-614 coordinates L-methionine. Glu-620 is a binding site for 5-methyltetrahydropteroyltri-L-glutamate. Zn(2+)-binding residues include His-656, Cys-658, and Glu-680. His-709 acts as the Proton donor in catalysis. Cys-741 serves as a coordination point for Zn(2+).

The protein belongs to the vitamin-B12 independent methionine synthase family. Requires Zn(2+) as cofactor.

The catalysed reaction is 5-methyltetrahydropteroyltri-L-glutamate + L-homocysteine = tetrahydropteroyltri-L-glutamate + L-methionine. Its pathway is amino-acid biosynthesis; L-methionine biosynthesis via de novo pathway; L-methionine from L-homocysteine (MetE route): step 1/1. Its function is as follows. Catalyzes the transfer of a methyl group from 5-methyltetrahydrofolate to homocysteine resulting in methionine formation. The chain is 5-methyltetrahydropteroyltriglutamate--homocysteine methyltransferase from Streptomyces avermitilis (strain ATCC 31267 / DSM 46492 / JCM 5070 / NBRC 14893 / NCIMB 12804 / NRRL 8165 / MA-4680).